The following is a 758-amino-acid chain: 5-methyltetrahydropteroyltriglutamate--homocysteine methyltransferase (758 aa).

Residues 17–20 (RELK) and Lys117 contribute to the 5-methyltetrahydropteroyltri-L-glutamate site. L-homocysteine contacts are provided by residues 434 to 436 (IGS) and Glu487. L-methionine-binding positions include 434–436 (IGS) and Glu487. 5-methyltetrahydropteroyltri-L-glutamate contacts are provided by residues 518 to 519 (RC) and Trp564. Asp602 is a binding site for L-homocysteine. Asp602 contacts L-methionine. Glu608 provides a ligand contact to 5-methyltetrahydropteroyltri-L-glutamate. Zn(2+) contacts are provided by His644, Cys646, and Glu668. The active-site Proton donor is the His697. Cys729 lines the Zn(2+) pocket.

It belongs to the vitamin-B12 independent methionine synthase family. It depends on Zn(2+) as a cofactor.

It carries out the reaction 5-methyltetrahydropteroyltri-L-glutamate + L-homocysteine = tetrahydropteroyltri-L-glutamate + L-methionine. Its pathway is amino-acid biosynthesis; L-methionine biosynthesis via de novo pathway; L-methionine from L-homocysteine (MetE route): step 1/1. In terms of biological role, catalyzes the transfer of a methyl group from 5-methyltetrahydrofolate to homocysteine resulting in methionine formation. The chain is 5-methyltetrahydropteroyltriglutamate--homocysteine methyltransferase from Yersinia pestis (strain Pestoides F).